A 222-amino-acid chain; its full sequence is Ribosomal RNA small subunit methyltransferase G (222 aa).

S-adenosyl-L-methionine contacts are provided by glycine 80, leucine 85, and arginine 149.

The protein belongs to the methyltransferase superfamily. RNA methyltransferase RsmG family.

It localises to the cytoplasm. Functionally, specifically methylates the N7 position of a guanine in 16S rRNA. The sequence is that of Ribosomal RNA small subunit methyltransferase G from Treponema pallidum (strain Nichols).